The primary structure comprises 207 residues: Ciliary microtubule-associated protein 3 (207 aa).

As to quaternary structure, interacts with proteins involved in ciliary transport, including ARL13B, CETN1, KIF3A, RAB6A, RAB8A, TUBB1 and TUBG1. Interacts with AURKA. In terms of tissue distribution, expressed in tissues rich in ciliated cells, such as lung, kidney, vas deferens and testis. Both isoforms 1 and 2 are expressed in testis.

It localises to the golgi apparatus. The protein resides in the golgi stack. It is found in the trans-Golgi network. Its subcellular location is the nucleus. The protein localises to the cytoplasm. It localises to the cytoplasmic vesicle. Its function is as follows. During primary cilia disassembly, involved in cilia disassembly. Required specifically to control cilia retraction as well as the liberation and duplication of the basal body/centrosome. May act by stimulating AURKA activity at the basal body in a cell cycle-dependent manner. This is Ciliary microtubule-associated protein 3 (Cimap3) from Mus musculus (Mouse).